A 707-amino-acid polypeptide reads, in one-letter code: MLTPTVRKFQYGQHTVTLETGMMARQATAAVMVTMDDTAVFVTVVGAKKAREGQDFFPLTVNYQERAYAAGRFPGGFFRREGRPGEGETLTARLIDRPIRPLFPEGFLNEVQVVATVVSVNPQVSPDIVAMIGASAALSLSGIPFNGPIGAARVGYINDQYVLNPTQDELKQSRLDLVVAGTDNAVLMVESEADLLSEDQMLGAVVFGHEQQQIVIENIKALAAEVGKPRWEWHAPEVNVALQRRVAEMAEARLGEAYHITEKQARYAKVDEIKESVIADLLAEDDALDAGEISDILGALEKAVVRGRVLRGEPRIDGREKDMIRALDVRTGVLPRTHGSALFTRGETQALVTATLGTERDAQNIDELMGERTDRFLLHYNFPPYSVGETGMMGSPKRREIGHGRLAKRGVLAVMPSQDAFPYTVRVVSEITESNGSSSMASVCGASLALMDAGVPIKAAVAGIAMGLVKEQDNFVVLSDILGDEDHLGDMDFKVAGSRDGVTALQMDIKIEGITREIMQVALNQAKGARLHILGVMEQAINAPRGDISEFAPRIHTIKINPEKIKDVIGKGGSVIRALTEETGTTIEIEDDGTVKIAATDGDKAKHAIRRIEEITAEIEVGRIYQGKVTRIVDFGAFVAIGGGKEGLVHISQIADKRVEKVTDYLQMGQEVAVKVLEVDRQGRVRLSIKEANASAAAGQDAPTDAE.

Mg(2+) is bound by residues Asp486 and Asp492. A KH domain is found at 553 to 612 (PRIHTIKINPEKIKDVIGKGGSVIRALTEETGTTIEIEDDGTVKIAATDGDKAKHAIRRI). In terms of domain architecture, S1 motif spans 622-690 (GRIYQGKVTR…RQGRVRLSIK (69 aa)).

The protein belongs to the polyribonucleotide nucleotidyltransferase family. Component of the RNA degradosome, which is a multiprotein complex involved in RNA processing and mRNA degradation. Mg(2+) is required as a cofactor.

The protein resides in the cytoplasm. The enzyme catalyses RNA(n+1) + phosphate = RNA(n) + a ribonucleoside 5'-diphosphate. Its function is as follows. Involved in mRNA degradation. Catalyzes the phosphorolysis of single-stranded polyribonucleotides processively in the 3'- to 5'-direction. The chain is Polyribonucleotide nucleotidyltransferase from Edwardsiella ictaluri (strain 93-146).